Consider the following 401-residue polypeptide: Argininosuccinate synthase (401 aa).

An ATP-binding site is contributed by 8-16; it reads AYSGGLDTS. Positions 86 and 91 each coordinate L-citrulline. Gly116 lines the ATP pocket. Residues Thr118, Asn122, and Asp123 each coordinate L-aspartate. Asn122 contacts L-citrulline. L-citrulline is bound by residues Arg126, Ser175, Ser184, Glu260, and Tyr272.

It belongs to the argininosuccinate synthase family. Type 1 subfamily. In terms of assembly, homotetramer.

Its subcellular location is the cytoplasm. The catalysed reaction is L-citrulline + L-aspartate + ATP = 2-(N(omega)-L-arginino)succinate + AMP + diphosphate + H(+). Its pathway is amino-acid biosynthesis; L-arginine biosynthesis; L-arginine from L-ornithine and carbamoyl phosphate: step 2/3. This Clostridium kluyveri (strain ATCC 8527 / DSM 555 / NBRC 12016 / NCIMB 10680 / K1) protein is Argininosuccinate synthase.